We begin with the raw amino-acid sequence, 363 residues long: UDP-N-acetylglucosamine--N-acetylmuramyl-(pentapeptide) pyrophosphoryl-undecaprenol N-acetylglucosamine transferase (363 aa).

UDP-N-acetyl-alpha-D-glucosamine is bound by residues 14 to 16 (TGG), Arg171, Ser200, and Gln290.

This sequence belongs to the glycosyltransferase 28 family. MurG subfamily.

The protein localises to the cell inner membrane. The catalysed reaction is di-trans,octa-cis-undecaprenyl diphospho-N-acetyl-alpha-D-muramoyl-L-alanyl-D-glutamyl-meso-2,6-diaminopimeloyl-D-alanyl-D-alanine + UDP-N-acetyl-alpha-D-glucosamine = di-trans,octa-cis-undecaprenyl diphospho-[N-acetyl-alpha-D-glucosaminyl-(1-&gt;4)]-N-acetyl-alpha-D-muramoyl-L-alanyl-D-glutamyl-meso-2,6-diaminopimeloyl-D-alanyl-D-alanine + UDP + H(+). Its pathway is cell wall biogenesis; peptidoglycan biosynthesis. Its function is as follows. Cell wall formation. Catalyzes the transfer of a GlcNAc subunit on undecaprenyl-pyrophosphoryl-MurNAc-pentapeptide (lipid intermediate I) to form undecaprenyl-pyrophosphoryl-MurNAc-(pentapeptide)GlcNAc (lipid intermediate II). The sequence is that of UDP-N-acetylglucosamine--N-acetylmuramyl-(pentapeptide) pyrophosphoryl-undecaprenol N-acetylglucosamine transferase from Borrelia garinii subsp. bavariensis (strain ATCC BAA-2496 / DSM 23469 / PBi) (Borreliella bavariensis).